The sequence spans 459 residues: Ribulose bisphosphate carboxylase (459 aa).

Asparagine 111 provides a ligand contact to substrate. Lysine 166 (proton acceptor) is an active-site residue. Lysine 168 lines the substrate pocket. Positions 191, 193, and 194 each coordinate Mg(2+). Lysine 191 is modified (N6-carboxylysine). Histidine 287 serves as the catalytic Proton acceptor. Substrate is bound by residues arginine 288, histidine 321, and serine 368.

The protein belongs to the RuBisCO large chain family. Type II subfamily. Homodimer. Mg(2+) is required as a cofactor.

The catalysed reaction is 2 (2R)-3-phosphoglycerate + 2 H(+) = D-ribulose 1,5-bisphosphate + CO2 + H2O. It catalyses the reaction D-ribulose 1,5-bisphosphate + O2 = 2-phosphoglycolate + (2R)-3-phosphoglycerate + 2 H(+). In terms of biological role, ruBisCO catalyzes two reactions: the carboxylation of D-ribulose 1,5-bisphosphate, the primary event in carbon dioxide fixation, as well as the oxidative fragmentation of the pentose substrate. Both reactions occur simultaneously and in competition at the same active site. The chain is Ribulose bisphosphate carboxylase from Polaromonas naphthalenivorans (strain CJ2).